Here is a 688-residue protein sequence, read N- to C-terminus: NADH-ubiquinone oxidoreductase 75 kDa subunit (688 aa).

Residues 1-85 (MLIRFKINEI…DESIETEIDE (85 aa)) enclose the 2Fe-2S ferredoxin-type domain. [2Fe-2S] cluster-binding residues include Cys-38, Cys-49, Cys-52, and Cys-66. A 4Fe-4S His(Cys)3-ligated-type domain is found at 85–124 (EILKAREGVMEFLLINHPLDCPICDQGGECDLQEQTIAYG). Residues His-101, Cys-105, Cys-108, Cys-114, Cys-153, Cys-156, Cys-159, and Cys-204 each coordinate [4Fe-4S] cluster. Residues 223–279 (LKNIKGIDIFDTVLTPINYQVKGGEIFRILPRINDRLNEEWITDKVRFHYESYKIIE) form the 4Fe-4S Mo/W bis-MGD-type domain.

This sequence belongs to the complex I 75 kDa subunit family. Complex I is composed of about 45 different subunits. [2Fe-2S] cluster serves as cofactor. Requires [4Fe-4S] cluster as cofactor.

It localises to the mitochondrion inner membrane. It carries out the reaction a ubiquinone + NADH + 5 H(+)(in) = a ubiquinol + NAD(+) + 4 H(+)(out). Its function is as follows. Core subunit of the mitochondrial membrane respiratory chain NADH dehydrogenase (Complex I) that is believed to belong to the minimal assembly required for catalysis. Complex I functions in the transfer of electrons from NADH to the respiratory chain. The immediate electron acceptor for the enzyme is believed to be ubiquinone. This is the largest subunit of complex I and it is a component of the iron-sulfur (IP) fragment of the enzyme. It may form part of the active site crevice where NADH is oxidized. The polypeptide is NADH-ubiquinone oxidoreductase 75 kDa subunit (nad11) (Dictyostelium citrinum (Slime mold)).